The primary structure comprises 202 residues: MYEGPVQDLIDELGKLPGVGPKSAQRIAFHLLQVEPPEIDRLQAALQKVRDGVQFCVVCGTVSDGELCRICADPRRDRTMICVVEEPKDVQAIERTREFRGRYHVLGGALDPLSGVGPDQLRIRELLARIGNQDDGVDVAEVIIATDPNTEGEATATYLVRMLRDFPGLTVTRLASGLPMGGDLEFADELTLGRALSGRRAL.

The segment at 56–71 (CVVCGTVSDGELCRIC) adopts a C4-type zinc-finger fold. The region spanning 79 to 179 (TMICVVEEPK…TVTRLASGLP (101 aa)) is the Toprim domain.

This sequence belongs to the RecR family.

In terms of biological role, may play a role in DNA repair. It seems to be involved in an RecBC-independent recombinational process of DNA repair. It may act with RecF and RecO. The chain is Recombination protein RecR from Nocardia farcinica (strain IFM 10152).